A 229-amino-acid chain; its full sequence is Urease accessory protein UreF (229 aa).

It belongs to the UreF family. UreD, UreF and UreG form a complex that acts as a GTP-hydrolysis-dependent molecular chaperone, activating the urease apoprotein by helping to assemble the nickel containing metallocenter of UreC. The UreE protein probably delivers the nickel.

The protein localises to the cytoplasm. Required for maturation of urease via the functional incorporation of the urease nickel metallocenter. The sequence is that of Urease accessory protein UreF from Staphylococcus aureus (strain MRSA252).